Here is a 510-residue protein sequence, read N- to C-terminus: GMP synthase [glutamine-hydrolyzing] (510 aa).

The region spanning 5–195 is the Glutamine amidotransferase type-1 domain; the sequence is LVFIIDFGGQ…LFNICELKGD (191 aa). C82 serves as the catalytic Nucleophile. Active-site residues include H169 and E171. Residues 196–385 form the GMPS ATP-PPase domain; sequence WSVTSFAEEK…LGIPHKLVWR (190 aa). ATP is bound at residue 223-229; sequence SGGVDSS.

As to quaternary structure, homodimer.

It carries out the reaction XMP + L-glutamine + ATP + H2O = GMP + L-glutamate + AMP + diphosphate + 2 H(+). It functions in the pathway purine metabolism; GMP biosynthesis; GMP from XMP (L-Gln route): step 1/1. Functionally, catalyzes the synthesis of GMP from XMP. The sequence is that of GMP synthase [glutamine-hydrolyzing] from Clostridium tetani (strain Massachusetts / E88).